A 338-amino-acid chain; its full sequence is Protein FosB (338 aa).

2 disordered regions span residues 1 to 54 and 80 to 179; these read MFQA…PGSF and AQSQ…RREL. Polar residues-rich tracts occupy residues 13-31 and 102-112; these read SRCSSSPSAESQYLSSVDS and TSYSTPGLSAY. Residue S27 is modified to Phosphoserine. The span at 123 to 137 shows a compositional bias: low complexity; that stretch reads PSTSTTTSGPVSARP. One can recognise a bZIP domain in the interval 155-218; sequence EEKRRVRRER…ERLEFVLVAH (64 aa). The segment at 157–182 is basic motif; it reads KRRVRRERNKLAAAKCRNRRRELTDR. Residues 183 to 211 form a leucine-zipper region; sequence LQAETDQLEEEKAELESEIAELQKEKERL. Disordered regions lie at residues 222–276 and 316–338; these read CKIP…PPNL and GAQRTSGSEQPSDPLNSPSLLAL. Over residues 256 to 265 the composition is skewed to pro residues; that stretch reads LPPPPPPPLP. 2 stretches are compositionally biased toward polar residues: residues 266–276 and 318–338; these read FQSSRDAPPNL and QRTSGSEQPSDPLNSPSLLAL.

It belongs to the bZIP family. Fos subfamily. In terms of assembly, heterodimer; binds to DNA as heterodimer. Component of an AP-1 transcription factor complex; composed of FOS-JUN heterodimers. As part of the AP-1 transcription factor complex, forms heterodimers with JUN, JUNB or JUND, thereby binding to the AP-1 consensus sequence and stimulating transcription. Interacts with the BAF multiprotein chromatin-remodeling complex subunits SMARCB1 and SMARCD1. Interacts with ARID1A and JUN. As to quaternary structure, homodimer under oxidizing conditions and monomer under reducing conditions (in vitro). Heterodimer; binds to DNA as heterodimer. Forms heterodimers with JUNB, JUN or JUND; thereby binding to the AP-1 consensus sequence but does not stimulate transcription. Forms heterodimers with JUND under oxidizing conditions. Post-translationally, phosphorylated. Phosphorylated at Ser-27 by CSNK2A1; phosphorylation increases protein stability and transactivation potential. Expressed in brain, including the preoptic area of the hypothalamus, the main and accessory olfactory bulbs, the pyriform cortex and the hippocampus (at protein level). Expressed in the neurons of the subgranular zone of the dentate gyrus in the hippocampus (at protein level). Expressed in pyramidal cells in CA1 and CA3, in the dentate gyrus and the nucleus accumbens of the striatum (at protein level). In terms of tissue distribution, expressed in the core and shell of the nucleus accumbens of the striatum (at protein level). Expressed in the neurons of the subgranular zone of the dentate gyrus in the hippocampus (at protein level).

The protein resides in the nucleus. Its function is as follows. Heterodimerizes with proteins of the JUN family to form an AP-1 transcription factor complex, thereby enhancing their DNA binding activity to gene promoters containing an AP-1 consensus sequence 5'-TGA[GC]TCA-3' and enhancing their transcriptional activity. As part of the AP-1 complex, facilitates enhancer selection together with cell-type-specific transcription factors by collaboratively binding to nucleosomal enhancers and recruiting the SWI/SNF (BAF) chromatin remodeling complex to establish accessible chromatin. Together with JUN, plays a role in activation-induced cell death of T cells by binding to the AP-1 promoter site of FASLG/CD95L, and inducing its transcription in response to activation of the TCR/CD3 signaling pathway. Exhibits transactivation activity in vitro. Involved in the display of nurturing behavior towards newborns. May play a role in neurogenesis in the hippocampus and in learning and memory-related tasks by regulating the expression of various genes involved in neurogenesis, depression and epilepsy. Implicated in behavioral responses related to morphine reward and spatial memory. In terms of biological role, exhibits lower transactivation activity than isoform 1 in vitro. The heterodimer with JUN does not display any transcriptional activity, and may thereby act as an transcriptional inhibitor. May be involved in the regulation of neurogenesis in the hippocampus. May play a role in synaptic modifications in nucleus accumbens medium spiny neurons and thereby play a role in adaptive and pathological reward-dependent learning, including maladaptive responses involved in drug addiction. Seems to be more stably expressed with a half-life of ~9.5 hours in cell culture as compared to 1.5 hours half-life of isoform 1. The sequence is that of Protein FosB from Mus musculus (Mouse).